Consider the following 282-residue polypeptide: Bifunctional protein FolD (282 aa).

Residues 164–166 (GAS), Ile-189, and Ile-230 each bind NADP(+).

The protein belongs to the tetrahydrofolate dehydrogenase/cyclohydrolase family. As to quaternary structure, homodimer.

The enzyme catalyses (6R)-5,10-methylene-5,6,7,8-tetrahydrofolate + NADP(+) = (6R)-5,10-methenyltetrahydrofolate + NADPH. It carries out the reaction (6R)-5,10-methenyltetrahydrofolate + H2O = (6R)-10-formyltetrahydrofolate + H(+). It participates in one-carbon metabolism; tetrahydrofolate interconversion. In terms of biological role, catalyzes the oxidation of 5,10-methylenetetrahydrofolate to 5,10-methenyltetrahydrofolate and then the hydrolysis of 5,10-methenyltetrahydrofolate to 10-formyltetrahydrofolate. This chain is Bifunctional protein FolD, found in Campylobacter jejuni subsp. doylei (strain ATCC BAA-1458 / RM4099 / 269.97).